Here is a 141-residue protein sequence, read N- to C-terminus: Hemoglobin subunit alpha (141 aa).

The Globin domain maps to 1 to 141 (VLSPADKSNV…VSTVLTSKYR (141 aa)). Ser-3 is modified (phosphoserine). Lys-7 and Lys-11 each carry N6-succinyllysine. Lys-16 is subject to N6-acetyllysine; alternate. The residue at position 16 (Lys-16) is an N6-succinyllysine; alternate. Tyr-24 is subject to Phosphotyrosine. A Phosphoserine modification is found at Ser-35. Lys-40 is modified (N6-succinyllysine). Phosphoserine is present on Ser-49. Residue His-58 participates in O2 binding. Residue His-87 participates in heme b binding. Residue Ser-102 is modified to Phosphoserine. Thr-108 carries the phosphothreonine modification. Phosphoserine is present on residues Ser-124 and Ser-131. Phosphothreonine is present on residues Thr-134 and Thr-137. Position 138 is a phosphoserine (Ser-138).

It belongs to the globin family. As to quaternary structure, heterotetramer of two alpha chains and two beta chains. In terms of tissue distribution, red blood cells.

In terms of biological role, involved in oxygen transport from the lung to the various peripheral tissues. Its function is as follows. Hemopressin acts as an antagonist peptide of the cannabinoid receptor CNR1. Hemopressin-binding efficiently blocks cannabinoid receptor CNR1 and subsequent signaling. The chain is Hemoglobin subunit alpha (HBA) from Saguinus oedipus (Cotton-top tamarin).